The primary structure comprises 288 residues: Killer cell lectin-like receptor 2 (288 aa).

Residues Met-1 to Phe-45 lie on the Cytoplasmic side of the membrane. A helical; Signal-anchor for type II membrane protein membrane pass occupies residues Ile-46–Ile-66. At His-67 to Ser-288 the chain is on the extracellular side. N-linked (GlcNAc...) asparagine glycans are attached at residues Asn-94, Asn-105, and Asn-114. The region spanning Gln-144–Leu-263 is the C-type lectin domain. Cystine bridges form between Cys-151/Cys-156, Cys-169/Cys-257, Cys-173/Cys-259, and Cys-238/Cys-251. Asn-177 carries N-linked (GlcNAc...) asparagine glycosylation.

As to quaternary structure, homodimer; disulfide-linked.

Its subcellular location is the membrane. Functionally, receptor on natural killer (NK) cells for class I MHC. The chain is Killer cell lectin-like receptor 2 (Klra2) from Mus musculus (Mouse).